Reading from the N-terminus, the 238-residue chain is Ribosome-recycling factor, mitochondrial (238 aa).

Belongs to the RRF family.

Its subcellular location is the mitochondrion. Responsible for the release of ribosomes from messenger RNA at the termination of protein biosynthesis. May increase the efficiency of translation by recycling ribosomes from one round of translation to another. This Caenorhabditis elegans protein is Ribosome-recycling factor, mitochondrial.